The following is a 632-amino-acid chain: uncharacterized protein (632 aa).

The protein belongs to the MG032/MG096/MG288 family.

This is an uncharacterized protein from Mycoplasma pneumoniae (strain ATCC 29342 / M129 / Subtype 1) (Mycoplasmoides pneumoniae).